Here is a 1014-residue protein sequence, read N- to C-terminus: C2 domain-containing protein 5 (1014 aa).

Residues methionine 1–phenylalanine 109 enclose the C2 domain. The Ca(2+) site is built by aspartate 19, aspartate 26, aspartate 76, aspartate 78, serine 81, and aspartate 84. 4 disordered regions span residues leucine 274 to glycine 328, glutamate 639 to aspartate 669, alanine 801 to glycine 878, and glutamate 992 to threonine 1014. Polar residues predominate over residues asparagine 275–tyrosine 292. Residues serine 293–glycine 318 are compositionally biased toward low complexity. Positions methionine 319 to glycine 328 are enriched in gly residues. Polar residues predominate over residues serine 830–serine 840. Residues alanine 993 to alanine 1006 are compositionally biased toward low complexity.

It depends on Ca(2+) as a cofactor.

The protein localises to the cytoplasmic vesicle membrane. The protein resides in the cytoplasm. Its subcellular location is the cell cortex. It localises to the cell membrane. It is found in the cell projection. The protein localises to the ruffle. May be required for insulin-stimulated glucose transport and glucose transporter SLC2A4/GLUT4 translocation from intracellular glucose storage vesicle (GSV) to the plasma membrane (PM) in adipocytes. May bind phospholipid membranes in a calcium-dependent manner. In Xenopus tropicalis (Western clawed frog), this protein is C2 domain-containing protein 5 (c2cd5).